The chain runs to 409 residues: Fructose-1,6-bisphosphatase, chloroplastic (409 aa).

The N-terminal 49 residues, 1–49 (MAAATTTTSRPLLLSRQQAAASSLQCRLPRRPGSSLFAGQGQASTPNVR), are a transit peptide targeting the chloroplast. Mg(2+)-binding residues include Glu-131, Glu-160, Asp-181, Leu-183, and Asp-184. 184-187 (DGSS) contributes to the substrate binding site. Cys-223 and Cys-228 are disulfide-bonded. 5 residues coordinate substrate: Asn-287, Tyr-319, Tyr-337, Tyr-339, and Lys-349. Glu-355 is a binding site for Mg(2+).

The protein belongs to the FBPase class 1 family. Homotetramer. It depends on Mg(2+) as a cofactor. In terms of tissue distribution, in photosynthetically active tissues, and in the shoot and root apical meristems.

The protein localises to the plastid. The protein resides in the chloroplast. The enzyme catalyses beta-D-fructose 1,6-bisphosphate + H2O = beta-D-fructose 6-phosphate + phosphate. It functions in the pathway carbohydrate biosynthesis; Calvin cycle. The polypeptide is Fructose-1,6-bisphosphatase, chloroplastic (FBP) (Triticum aestivum (Wheat)).